Consider the following 935-residue polypeptide: Isoleucine--tRNA ligase (935 aa).

Positions 58 to 68 (PYANGSIHVGH) match the 'HIGH' region motif. Position 558 (E558) interacts with L-isoleucyl-5'-AMP. Residues 599–603 (KMSKS) carry the 'KMSKS' region motif. K602 contacts ATP. The Zn(2+) site is built by C897, C900, C917, and C920.

The protein belongs to the class-I aminoacyl-tRNA synthetase family. IleS type 1 subfamily. As to quaternary structure, monomer. Zn(2+) is required as a cofactor.

It is found in the cytoplasm. It carries out the reaction tRNA(Ile) + L-isoleucine + ATP = L-isoleucyl-tRNA(Ile) + AMP + diphosphate. Its function is as follows. Catalyzes the attachment of isoleucine to tRNA(Ile). As IleRS can inadvertently accommodate and process structurally similar amino acids such as valine, to avoid such errors it has two additional distinct tRNA(Ile)-dependent editing activities. One activity is designated as 'pretransfer' editing and involves the hydrolysis of activated Val-AMP. The other activity is designated 'posttransfer' editing and involves deacylation of mischarged Val-tRNA(Ile). The polypeptide is Isoleucine--tRNA ligase (Francisella tularensis subsp. holarctica (strain OSU18)).